The sequence spans 131 residues: Large ribosomal subunit protein bL12 (131 aa).

This sequence belongs to the bacterial ribosomal protein bL12 family. Homodimer. Part of the ribosomal stalk of the 50S ribosomal subunit. Forms a multimeric L10(L12)X complex, where L10 forms an elongated spine to which 2 to 4 L12 dimers bind in a sequential fashion. Binds GTP-bound translation factors.

Forms part of the ribosomal stalk which helps the ribosome interact with GTP-bound translation factors. Is thus essential for accurate translation. The chain is Large ribosomal subunit protein bL12 from Nocardioides sp. (strain ATCC BAA-499 / JS614).